Consider the following 171-residue polypeptide: Cyclin-dependent kinase inhibitor 2A (171 aa).

Residues 33–42 (ASMHTKHESE) show a composition bias toward basic and acidic residues. Positions 33-52 (ASMHTKHESEESFSGEKLTE) are disordered. ANK repeat units lie at residues 45-74 (FSGE…NPNA), 78-106 (FGRS…EPNT), and 111-140 (TLTL…RLDV).

The protein belongs to the CDKN2 cyclin-dependent kinase inhibitor family. As to quaternary structure, heterodimer with CDK4 or CDK6. Predominamt P16 complexes contained CDK6. Interacts with CDK4 (both 'T-172'-phosphorylated and non-phosphorylated forms); the interaction inhibits cyclin D-CDK4 kinase activity. Interacts with ISCO2. Expressed predominantly in lung and testis. In the testis, restricted to germ cells in the seminiferous epithelium. Not detected in premeiotic spermatogonia but high levels found in postmeiotic spermatids. In primary tumors, low levels detected in melanocytic hyperplasias. Higher levels found in non-metastatic and metastatic melanomas.

It localises to the cytoplasm. The protein resides in the nucleus. Its function is as follows. Acts as a negative regulator of the proliferation of normal cells by interacting strongly with CDK4 and CDK6. This inhibits their ability to interact with cyclins D and to phosphorylate the retinoblastoma protein. The sequence is that of Cyclin-dependent kinase inhibitor 2A from Monodelphis domestica (Gray short-tailed opossum).